The chain runs to 575 residues: Proline--tRNA ligase (575 aa).

It belongs to the class-II aminoacyl-tRNA synthetase family. ProS type 1 subfamily. In terms of assembly, homodimer.

It localises to the cytoplasm. The catalysed reaction is tRNA(Pro) + L-proline + ATP = L-prolyl-tRNA(Pro) + AMP + diphosphate. Functionally, catalyzes the attachment of proline to tRNA(Pro) in a two-step reaction: proline is first activated by ATP to form Pro-AMP and then transferred to the acceptor end of tRNA(Pro). As ProRS can inadvertently accommodate and process non-cognate amino acids such as alanine and cysteine, to avoid such errors it has two additional distinct editing activities against alanine. One activity is designated as 'pretransfer' editing and involves the tRNA(Pro)-independent hydrolysis of activated Ala-AMP. The other activity is designated 'posttransfer' editing and involves deacylation of mischarged Ala-tRNA(Pro). The misacylated Cys-tRNA(Pro) is not edited by ProRS. This is Proline--tRNA ligase from Solidesulfovibrio magneticus (strain ATCC 700980 / DSM 13731 / RS-1) (Desulfovibrio magneticus).